The following is a 587-amino-acid chain: Pyruvate decarboxylase 3 (587 aa).

Residues Asp48 and His135 each contribute to the substrate site. Residues 415-496 (DSWFNCQKLR…FLINNGGYTI (82 aa)) form a thiamine pyrophosphate binding region. Asp464, Asn491, and Gly493 together coordinate Mg(2+). Glu497 contributes to the substrate binding site.

It belongs to the TPP enzyme family. In terms of assembly, homotetramer. The cofactor is a metal cation. It depends on thiamine diphosphate as a cofactor.

It carries out the reaction a 2-oxocarboxylate + H(+) = an aldehyde + CO2. The protein is Pyruvate decarboxylase 3 (PDC3) of Oryza sativa subsp. japonica (Rice).